Consider the following 285-residue polypeptide: NADH-dependent oxidoreductase ucdB (285 aa).

Thr-87 contributes to the NAD(+) binding site. Residue Lys-156 is part of the active site.

This sequence belongs to the HIBADH-related family. NP60 subfamily.

The protein operates within secondary metabolite biosynthesis. Functionally, nonribosomal peptide synthetase that mediates the biosynthesis of usterphenyllins and uscandidusins, p-terphenyl derivatives. Within the pathway, ucdB alone catalyzes both reduction and dehydration of atromentin to form a terphenyl triol intermediate. The pathway begin with the biosynthesis of 4-hydroxyphenylpyruvate (HPPA) from L-tyrosine, possibly by the aminotransferase ucdG. The nonribosomal peptide synthetase ucdA then condenses two HPPA units to produce atromentin. The key step in this pathway is the reduction and dehydration of atromentin to form a terphenyl triol intermediate, performed by the NAD-dependent dehydrogenase ucdB. Further O-methylation by the methyltransferase ucdC forms terphenyllin carrying two methoxy moieties at C-9 and C-12, and subsequent dihydroxylation at C-3 of ring A and C-15 of ring C by the flavin-dependent oxygenase ucdD leads to 3,15-dihydroxyterphenyllin. Prenylation by ucdE at position C-5 of ring A forms usterphenyllin B, and is followed by a second prenylation at position C-14 of ring C to form usterphenyllin A. The following furan ring formation that leads to uscandidusins A and B was proven to be an unexpected spontaneous non-enzymatic reaction. This chain is NADH-dependent oxidoreductase ucdB, found in Aspergillus ustus.